Reading from the N-terminus, the 622-residue chain is DNA mismatch repair protein MutL (622 aa).

Over residues 399 to 414 the composition is skewed to basic and acidic residues; it reads SSQNFHPDENDYRAEE. The segment at 399–422 is disordered; the sequence is SSQNFHPDENDYRAEEASPAEENP.

The protein belongs to the DNA mismatch repair MutL/HexB family.

Its function is as follows. This protein is involved in the repair of mismatches in DNA. It is required for dam-dependent methyl-directed DNA mismatch repair. May act as a 'molecular matchmaker', a protein that promotes the formation of a stable complex between two or more DNA-binding proteins in an ATP-dependent manner without itself being part of a final effector complex. The protein is DNA mismatch repair protein MutL of Phocaeicola vulgatus (strain ATCC 8482 / DSM 1447 / JCM 5826 / CCUG 4940 / NBRC 14291 / NCTC 11154) (Bacteroides vulgatus).